A 696-amino-acid polypeptide reads, in one-letter code: MDADMDYERPNVETIKCVVVGDNAVGKTRLICARACNTTLTQYQLLATHVPTVWAIDQYRVCQEVLERSRDVVDEVSVSLRLWDTFGDHHKDRRFAYGRSDVVVLCFSIANPNSLNHVKSMWYPEIKHFCPRTPVILVGCQLDLRYADLEAVNRARRPLARPIKRGDILPPEKGREVAKELGLPYYETSVFDQFGIKDVFDNAIRAALISRRHLQFWKSHLKKVQKPLLQAPFLPPKAPPPVIKIPECPSMGTNEAACLLDNPLCADVLFILQDQEHIFAHRIYLATSSSKFYDLFLMECEESPNGSEGACEKEKQSRDFQGRILSVDPEEEREEGPPRIPQADQWKSSNKSLVEALGLEAEGAVPETQTLTGWSKGFIGMHREMQVNPISKRMGPMTVVRMDASVQPGPFRTLLQFLYTGQLDEKEKDLVGLAQIAEVLEMFDLRMMVENIMNKEAFMNQEITKAFHVRKANRIKECLSKGTFSDVTFKLDDGAISAHKPLLICSCEWMAAMFGGSFVESANSEVYLPNINKISMQAVLDYLYTKQLSPNLDLDPLELIALANRFCLPHLVALAEQHAVQELTKAATSGVGIDGEVLSYLELAQFHNAHQLAAWCLHHICTNYNSVCSKFRKEIKSKSADNQEYFERHRWPPVWYLKEEDHYQRVKREREKEDIALNKHRSRRKWCFWNSSPAVA.

Positions 1–210 (MDADMDYERP…DNAIRAALIS (210 aa)) are rho-like. GTP is bound by residues 21-28 (GDNAVGKT), 84-88 (DTFGD), and 140-143 (CQLD). BTB domains lie at 266 to 427 (ADVL…DEKE) and 485 to 552 (SDVT…SPNL). The interval 327–348 (VDPEEEREEGPPRIPQADQWKS) is disordered.

It belongs to the small GTPase superfamily. Rho family. Ubiquitous, with highest levels in skeletal muscle, placenta, testis, stomach, and kidney, followed by uterus and adrenal gland. Expressed in a variety of fetal tissues.

The sequence is that of Rho-related BTB domain-containing protein 1 (RHOBTB1) from Homo sapiens (Human).